We begin with the raw amino-acid sequence, 306 residues long: tRNA pseudouridine synthase B (306 aa).

Residue D47 is the Nucleophile of the active site.

It belongs to the pseudouridine synthase TruB family. Type 1 subfamily.

The enzyme catalyses uridine(55) in tRNA = pseudouridine(55) in tRNA. In terms of biological role, responsible for synthesis of pseudouridine from uracil-55 in the psi GC loop of transfer RNAs. This Neisseria gonorrhoeae (strain NCCP11945) protein is tRNA pseudouridine synthase B.